Reading from the N-terminus, the 590-residue chain is Conglutin beta 4 (590 aa).

The N-terminal stretch at 1-30 (MIKMRVRFPTLVLLLGIVFLMAVSIGIAYG) is a signal peptide. The segment covering 38–105 (HERPQEREQE…REPRREREQE (68 aa)) has biased composition (basic and acidic residues). The segment at 38-175 (HERPQEREQE…DSRRQRNPYY (138 aa)) is disordered. Residues 137 to 146 (QGSSSSSRRQ) are compositionally biased toward low complexity. One can recognise a Cupin type-1 1 domain in the interval 174 to 332 (YYFSSERFQT…TFNTRYEEIQ (159 aa)). The N-linked (GlcNAc...) asparagine glycan is linked to Asn239. Disordered regions lie at residues 340–362 (DEQEDDEQRHGQEQSHQDEGVIV) and 374–396 (KYAQSSSRKGKPSKSGPFNLRSN). Residues 346–362 (EQRHGQEQSHQDEGVIV) are compositionally biased toward basic and acidic residues. The Cupin type-1 2 domain maps to 391–548 (FNLRSNKPIY…TFPGSTEDVE (158 aa)). Asn498 carries an N-linked (GlcNAc...) asparagine glycan. Positions 559–579 (FANAQPQQQQQREREGRRGRR) are disordered.

It belongs to the 7S seed storage protein family. Component of globulins complexes which accumulate in seeds.

Seed storage protein. Accumulates during seed development and is hydrolyzed after germination to provide a carbon and nitrogen source for the developing seedling. The chain is Conglutin beta 4 from Lupinus angustifolius (Narrow-leaved blue lupine).